A 279-amino-acid chain; its full sequence is Sulfur carrier protein FdhD (279 aa).

Cysteine 112 acts as the Cysteine persulfide intermediate in catalysis.

It belongs to the FdhD family.

The protein localises to the cytoplasm. In terms of biological role, required for formate dehydrogenase (FDH) activity. Acts as a sulfur carrier protein that transfers sulfur from IscS to the molybdenum cofactor prior to its insertion into FDH. In Nocardia farcinica (strain IFM 10152), this protein is Sulfur carrier protein FdhD.